Consider the following 262-residue polypeptide: Hydroxyacylglutathione hydrolase (262 aa).

Positions 53, 55, 57, 58, 111, 128, and 166 each coordinate Zn(2+).

The protein belongs to the metallo-beta-lactamase superfamily. Glyoxalase II family. Monomer. It depends on Zn(2+) as a cofactor.

It catalyses the reaction an S-(2-hydroxyacyl)glutathione + H2O = a 2-hydroxy carboxylate + glutathione + H(+). It functions in the pathway secondary metabolite metabolism; methylglyoxal degradation; (R)-lactate from methylglyoxal: step 2/2. Thiolesterase that catalyzes the hydrolysis of S-D-lactoyl-glutathione to form glutathione and D-lactic acid. The chain is Hydroxyacylglutathione hydrolase from Nitrosomonas europaea (strain ATCC 19718 / CIP 103999 / KCTC 2705 / NBRC 14298).